Here is a 186-residue protein sequence, read N- to C-terminus: Adenine phosphoribosyltransferase (186 aa).

It belongs to the purine/pyrimidine phosphoribosyltransferase family. Homodimer.

It is found in the cytoplasm. It catalyses the reaction AMP + diphosphate = 5-phospho-alpha-D-ribose 1-diphosphate + adenine. The protein operates within purine metabolism; AMP biosynthesis via salvage pathway; AMP from adenine: step 1/1. In terms of biological role, catalyzes a salvage reaction resulting in the formation of AMP, that is energically less costly than de novo synthesis. This Xanthomonas euvesicatoria pv. vesicatoria (strain 85-10) (Xanthomonas campestris pv. vesicatoria) protein is Adenine phosphoribosyltransferase.